Consider the following 75-residue polypeptide: Iota-conotoxin-like R11.3 (75 aa).

The N-terminal stretch at 1–19 (MKLCLTFLLVLMILASVTG) is a signal peptide. The propeptide occupies 20–34 (EKLSEQTLRRAARKN). 4 disulfides stabilise this stretch: cysteine 39–cysteine 53, cysteine 46–cysteine 58, cysteine 52–cysteine 63, and cysteine 57–cysteine 70.

Belongs to the conotoxin I1 superfamily. As to expression, expressed by the venom duct.

The protein resides in the secreted. Iota-conotoxins bind to voltage-gated sodium channels (Nav) and act as agonists by shifting the voltage-dependence of activation to more hyperpolarized levels. Produces general excitatory symptoms. This is Iota-conotoxin-like R11.3 from Conus radiatus (Rayed cone).